Reading from the N-terminus, the 173-residue chain is Co-chaperone protein HscB homolog (173 aa).

In terms of domain architecture, J spans 3 to 75; sequence NPFSLFNLPV…IARATAIIEI (73 aa).

This sequence belongs to the HscB family. Interacts with HscA and stimulates its ATPase activity.

In terms of biological role, co-chaperone involved in the maturation of iron-sulfur cluster-containing proteins. Seems to help targeting proteins to be folded toward HscA. The polypeptide is Co-chaperone protein HscB homolog (Haemophilus ducreyi (strain 35000HP / ATCC 700724)).